A 371-amino-acid chain; its full sequence is MRESWGASLKTICLIGGKLQGFEAAYLSKKAGMKVLVIDKNPQALIRNYADEFQCFNITEEPEKLVAISKNVDAILPVNENLECIEFLNSIKEKFSCPVLFDFEAYRISRDKRKSKEYFASIGTPTPQDKPSEPPYFVKPPCESSSVGARIIHDRKELKELEPGMLIEEYVEGEVVSLEVIGDGNNFAVVKETLVHIDDTYDCHMVTPLPLDPSFRELSYSLAANLPLKGIMDVEAISGPLGLKVIEIDARFPSQTPTAVYYSSGINLIELLFRAFNGGIEEIKTLPEDRYCIYEHLMLAENGVLIPVGEQVLSMGNDYGNYYEEPGIEIFLCKGENPVFTLVFWGRDREEAEARKNKGLSILKSRFGAAA.

Lys18 provides a ligand contact to ATP. An L-lysine-binding site is contributed by 19–20 (LQ). ATP is bound by residues Asp39, 57-58 (NI), and 80-81 (EN). Glu80 is a binding site for L-lysine. Residues 93 to 277 (EKFSCPVLFD…LIELLFRAFN (185 aa)) enclose the ATP-grasp domain. Residues Lys112, Lys139, Ser146, and 168–171 (EEYV) contribute to the ADP site. D-ornithine contacts are provided by residues 177–179 (SLE) and Asp233. Mg(2+) is bound by residues Glu235, Glu247, and Asp249. Glu247 lines the ADP pocket. D-ornithine-binding positions include 251–256 (RFPSQT) and Glu310. L-lysine contacts are provided by Ser254 and Glu310.

Belongs to the PylC family. Mg(2+) serves as cofactor.

The catalysed reaction is (3R)-3-methyl-D-ornithine + L-lysine + ATP = (3R)-3-methyl-D-ornithyl-N(6)-L-lysine + ADP + phosphate + H(+). It participates in amino-acid biosynthesis; L-pyrrolysine biosynthesis. Its function is as follows. Is required for the biosynthesis of pyrrolysine. Catalyzes the ATP-dependent ligation between (3R)-3-methyl-D-ornithine and L-lysine, leading to (3R)-3-methyl-D-ornithyl-N6-L-lysine. Is also involved in the synthesis of pyrroline-carboxy-lysine (Pcl), a demethylated form of pyrrolysine that is generated by the pyrrolysine biosynthetic enzymes when the growth media is supplemented with D-ornithine. The protein is 3-methyl-D-ornithine--L-lysine ligase of Methanosarcina mazei (strain ATCC BAA-159 / DSM 3647 / Goe1 / Go1 / JCM 11833 / OCM 88) (Methanosarcina frisia).